Consider the following 955-residue polypeptide: RNA polymerase-associated protein RapA (955 aa).

The Helicase ATP-binding domain occupies 163–333 (EVGHRYAPRV…FARLRLLDPE (171 aa)). 176-183 (DEVGLGKT) is an ATP binding site. Positions 279 to 282 (DEAH) match the DEAH box motif. The Helicase C-terminal domain maps to 478–642 (RVEWLLELLL…AVRDELFELL (165 aa)).

It belongs to the SNF2/RAD54 helicase family. RapA subfamily. In terms of assembly, interacts with the RNAP. Has a higher affinity for the core RNAP than for the holoenzyme. Its ATPase activity is stimulated by binding to RNAP.

Transcription regulator that activates transcription by stimulating RNA polymerase (RNAP) recycling in case of stress conditions such as supercoiled DNA or high salt concentrations. Probably acts by releasing the RNAP, when it is trapped or immobilized on tightly supercoiled DNA. Does not activate transcription on linear DNA. Probably not involved in DNA repair. This chain is RNA polymerase-associated protein RapA, found in Aeromonas hydrophila subsp. hydrophila (strain ATCC 7966 / DSM 30187 / BCRC 13018 / CCUG 14551 / JCM 1027 / KCTC 2358 / NCIMB 9240 / NCTC 8049).